Reading from the N-terminus, the 234-residue chain is MDNVLARPADICCLKGSFHSGDATGSTIQIDGIDTYVAKPHPDKSNGNVLLFFPDAFGLHINSFLMMDAFAECGYLTLGVDYFLGDPVTKHSLTPLSDPNFDFESWKNKHLKASEDAAARWVKAVKAQYGSSEDVRFACVGYCWGARFVCQQLSADAPIFFSVPSTDKLFEPEQRSRTIEILTENNKQFNMQVFANVGHGFASRARLTDPYEKWAKEATFKSFVDWFDFWMEKK.

Active-site residues include Cys143, Asp167, and His199.

The protein belongs to the dienelactone hydrolase family.

It participates in xenobiotic degradation. Dienlactone hydrolase; part of the Fusarium detoxification of benzoxazolinone cluster 2 (FDB2) involved in the degradation of benzoxazolinones produced by the host plant. Maize, wheat, and rye produce the 2 benzoxazinone phytoanticipins 2,4-dihy-droxy-7-methoxy-1,4-benzoxazin-3-one (DIMBOA) and 2,4-dihydroxy-1,4-benzoxazin-3-one (DIBOA) that, due to their inherent instability once released, spontaneously degrade to the more stable corresponding benzoxazolinones, 6-methoxy-2-benzoxazolinone (MBOA) and 2-benzoxazolinone (BOA), respectively. The first step in the detoxification of benzoxazolinones involves the hydrolysis of the cyclic ester bond of benzoxazolinones by the FDB1 cluster gamma-lactamase MBL1 to aminophenols. MBL1 is able to convert BOA into 2-aminophenol (2-AP), as well as MBOA into 5-methoxy-2-aminophenol (2-AMP). The FDB2 cluster N-malonyltransferase FDB2/NAT1 then metabolizes aminophenols via N-malonylation to non-toxic malonamic acids. FDB2/NAT1 converts 2-AP into N-(2-hydroxyphenyl) malonamic acid (HPMA) and 2-AMP into N-(2-hydroxy-4-methoxyphenyl) malonamic acid (HMPMA). The duplicated dienlactone hydrolases DLH1 and DLH2 may provide redundant function for hydrolyzing the lactone moiety in the BOA molecule. The roles of the amidases and other enzymes encoded by the 2 FDB clusters have not been identified so far. This Gibberella moniliformis (strain M3125 / FGSC 7600) (Maize ear and stalk rot fungus) protein is Dienlactone hydrolase 2.